The sequence spans 351 residues: Transmembrane and coiled-coil domain-containing protein 5B (351 aa).

Residues 17 to 214 are a coiled coil; sequence EIPKLEITKQ…WRSSIQSAKT (198 aa). The chain crosses the membrane as a helical span at residues 292–312; it reads IFVVMIFFRLLGYVLFYLQYI.

The protein belongs to the TMCO5 family.

The protein localises to the membrane. This chain is Transmembrane and coiled-coil domain-containing protein 5B (TMCO5B), found in Bos taurus (Bovine).